The chain runs to 149 residues: MDKITGPFRKSKKSFRKPLPPIQSGDRIDYQNIDVLRRFISQQGKILSRRVNRLTLKQQRLLNLAIKQARILSFLPFTNTESLEKMKARIREARLKAEEVRLKNKEARLKKAKDARLKAKEARNQKKTTLRKIFINPKTSKLNTETSQT.

Residues Met1–Gln23 form a disordered region.

It belongs to the bacterial ribosomal protein bS18 family. Part of the 30S ribosomal subunit.

Its subcellular location is the plastid. This chain is Small ribosomal subunit protein bS18c, found in Cuscuta obtusiflora (Peruvian dodder).